Consider the following 475-residue polypeptide: ATP synthase subunit beta (475 aa).

An ATP-binding site is contributed by 152-159 (GGAGVGKT).

The protein belongs to the ATPase alpha/beta chains family. In terms of assembly, F-type ATPases have 2 components, CF(1) - the catalytic core - and CF(0) - the membrane proton channel. CF(1) has five subunits: alpha(3), beta(3), gamma(1), delta(1), epsilon(1). CF(0) has three main subunits: a(1), b(2) and c(9-12). The alpha and beta chains form an alternating ring which encloses part of the gamma chain. CF(1) is attached to CF(0) by a central stalk formed by the gamma and epsilon chains, while a peripheral stalk is formed by the delta and b chains.

It is found in the cell membrane. It catalyses the reaction ATP + H2O + 4 H(+)(in) = ADP + phosphate + 5 H(+)(out). Produces ATP from ADP in the presence of a proton gradient across the membrane. The catalytic sites are hosted primarily by the beta subunits. This chain is ATP synthase subunit beta, found in Wolbachia pipientis wMel.